We begin with the raw amino-acid sequence, 532 residues long: Cytochrome P450 714B2 (532 aa).

Residues 1 to 2 (ME) are Lumenal-facing. A helical; Signal-anchor for type III membrane protein transmembrane segment spans residues 3-23 (VGMVVVVAAKVLVSLWCVGAC). Topologically, residues 24–532 (CLAAYLYRVV…LTRVQGAYRH (509 aa)) are cytoplasmic. Cysteine 474 contributes to the heme binding site.

The protein belongs to the cytochrome P450 family. Requires heme as cofactor. As to expression, highly expressed in shoot, spikelet and uppermost internode. Detected in roots, leaves and anthers.

The protein resides in the membrane. Its function is as follows. Catalyzes the 13-hydroxylation of gibberellins (GAs). Determines the ratio of GA4 and GA1. Converts GA12 into GA53. This chain is Cytochrome P450 714B2 (CYP714B2), found in Oryza sativa subsp. japonica (Rice).